The chain runs to 322 residues: ATP-dependent 6-phosphofructokinase (322 aa).

G11 serves as a coordination point for ATP. ADP is bound at residue 21 to 25 (RAVVR). ATP-binding positions include 72 to 73 (RC) and 102 to 105 (GDGS). D103 lines the Mg(2+) pocket. 127–129 (TID) is a substrate binding site. D129 (proton acceptor) is an active-site residue. R156 contacts ADP. Substrate is bound by residues R164 and 171–173 (MGR). ADP-binding positions include 187-189 (GAE), R213, and 215-217 (KKH). Substrate-binding positions include E224, R245, and 251–254 (HVQR).

The protein belongs to the phosphofructokinase type A (PFKA) family. ATP-dependent PFK group I subfamily. Prokaryotic clade 'B1' sub-subfamily. In terms of assembly, homotetramer. Mg(2+) serves as cofactor.

It localises to the cytoplasm. It carries out the reaction beta-D-fructose 6-phosphate + ATP = beta-D-fructose 1,6-bisphosphate + ADP + H(+). The protein operates within carbohydrate degradation; glycolysis; D-glyceraldehyde 3-phosphate and glycerone phosphate from D-glucose: step 3/4. With respect to regulation, allosterically activated by ADP and other diphosphonucleosides, and allosterically inhibited by phosphoenolpyruvate. In terms of biological role, catalyzes the phosphorylation of D-fructose 6-phosphate to fructose 1,6-bisphosphate by ATP, the first committing step of glycolysis. The polypeptide is ATP-dependent 6-phosphofructokinase (Staphylococcus aureus (strain MRSA252)).